A 348-amino-acid chain; its full sequence is Flagellar P-ring protein (348 aa).

The signal sequence occupies residues 1-16 (MRVLTIFLLFMTSIFA).

Belongs to the FlgI family. As to quaternary structure, the basal body constitutes a major portion of the flagellar organelle and consists of four rings (L,P,S, and M) mounted on a central rod.

It is found in the periplasm. Its subcellular location is the bacterial flagellum basal body. In terms of biological role, assembles around the rod to form the L-ring and probably protects the motor/basal body from shearing forces during rotation. In Campylobacter jejuni subsp. doylei (strain ATCC BAA-1458 / RM4099 / 269.97), this protein is Flagellar P-ring protein.